Here is a 127-residue protein sequence, read N- to C-terminus: Ribosome-binding factor A (127 aa).

Belongs to the RbfA family. As to quaternary structure, monomer. Binds 30S ribosomal subunits, but not 50S ribosomal subunits or 70S ribosomes.

The protein resides in the cytoplasm. One of several proteins that assist in the late maturation steps of the functional core of the 30S ribosomal subunit. Associates with free 30S ribosomal subunits (but not with 30S subunits that are part of 70S ribosomes or polysomes). Required for efficient processing of 16S rRNA. May interact with the 5'-terminal helix region of 16S rRNA. This Stenotrophomonas maltophilia (strain R551-3) protein is Ribosome-binding factor A.